The sequence spans 362 residues: UDP-N-acetylglucosamine--N-acetylmuramyl-(pentapeptide) pyrophosphoryl-undecaprenol N-acetylglucosamine transferase (362 aa).

Residues R166, S196, and Q290 each contribute to the UDP-N-acetyl-alpha-D-glucosamine site.

The protein belongs to the glycosyltransferase 28 family. MurG subfamily.

It localises to the cell membrane. It carries out the reaction Mur2Ac(oyl-L-Ala-gamma-D-Glu-L-Lys-D-Ala-D-Ala)-di-trans,octa-cis-undecaprenyl diphosphate + UDP-N-acetyl-alpha-D-glucosamine = beta-D-GlcNAc-(1-&gt;4)-Mur2Ac(oyl-L-Ala-gamma-D-Glu-L-Lys-D-Ala-D-Ala)-di-trans,octa-cis-undecaprenyl diphosphate + UDP + H(+). It functions in the pathway cell wall biogenesis; peptidoglycan biosynthesis. In terms of biological role, cell wall formation. Catalyzes the transfer of a GlcNAc subunit on undecaprenyl-pyrophosphoryl-MurNAc-pentapeptide (lipid intermediate I) to form undecaprenyl-pyrophosphoryl-MurNAc-(pentapeptide)GlcNAc (lipid intermediate II). This chain is UDP-N-acetylglucosamine--N-acetylmuramyl-(pentapeptide) pyrophosphoryl-undecaprenol N-acetylglucosamine transferase, found in Staphylococcus carnosus (strain TM300).